The chain runs to 22 residues: Unknown protein from spot 168 of 2D-PAGE of etiolated coleoptile (22 aa).

In Zea mays (Maize), this protein is Unknown protein from spot 168 of 2D-PAGE of etiolated coleoptile.